Here is a 321-residue protein sequence, read N- to C-terminus: Gap junction delta-2 protein (321 aa).

Over 1-19 the chain is Cytoplasmic; sequence MGEWTILERLLEAAVQQHS. The chain crosses the membrane as a helical span at residues 20 to 42; sequence TMIGRILLTVVVIFRILIVAIVG. Topologically, residues 43–75 are extracellular; it reads ETVYDDEQTMFVCNTLQPGCNQACYDRAFPISH. A helical membrane pass occupies residues 76 to 98; it reads IRYWVFQIIMVCTPSLCFITYSV. At 99 to 197 the chain is on the cytoplasmic side; that stretch reads HQSAKQRERR…KLRRQEGISR (99 aa). The tract at residues 118 to 141 is disordered; that stretch reads RDPPESIGGPGGTGGGGSGGGKRE. Residues 125 to 137 are compositionally biased toward gly residues; it reads GGPGGTGGGGSGG. Residues 198-220 form a helical membrane-spanning segment; that stretch reads FYIIQVVFRNALEIGFLVGQYFL. At 221–252 the chain is on the extracellular side; sequence YGFSVPGLYECNRYPCIKEVECYVSRPTEKTV. The helical transmembrane segment at 253-275 threads the bilayer; it reads FLVFMFAVSGICVVLNLAELNHL. At 276 to 321 the chain is on the cytoplasmic side; the sequence is GWRKIKLAVRGAQAKRKSIYEIRNKDLPRVSVPNFGRTQSSDSAYV.

Belongs to the connexin family. Delta-type subfamily. In terms of assembly, a connexon is composed of a hexamer of connexins. As to expression, highly expressed in neurons.

The protein resides in the cell membrane. It is found in the cell junction. Its subcellular location is the gap junction. In terms of biological role, one gap junction consists of a cluster of closely packed pairs of transmembrane channels, the connexons, through which materials of low MW diffuse from one cell to a neighboring cell. This chain is Gap junction delta-2 protein (GJD2), found in Homo sapiens (Human).